A 20-amino-acid polypeptide reads, in one-letter code: Blooming-related protein 2 (20 aa).

A disordered region spans residues 1–20 (VSAEYLERQGPKDDXDCFDD).

Its function is as follows. Possible 'checkpoint' protein for cell division in the blooming process. In Prorocentrum triestinum (Red tide alga), this protein is Blooming-related protein 2.